A 541-amino-acid polypeptide reads, in one-letter code: Glucose-6-phosphate isomerase (541 aa).

Glu354 (proton donor) is an active-site residue. Catalysis depends on residues His385 and Lys505.

Belongs to the GPI family.

The protein localises to the cytoplasm. It catalyses the reaction alpha-D-glucose 6-phosphate = beta-D-fructose 6-phosphate. The protein operates within carbohydrate biosynthesis; gluconeogenesis. It participates in carbohydrate degradation; glycolysis; D-glyceraldehyde 3-phosphate and glycerone phosphate from D-glucose: step 2/4. Its function is as follows. Catalyzes the reversible isomerization of glucose-6-phosphate to fructose-6-phosphate. This Cupriavidus metallidurans (strain ATCC 43123 / DSM 2839 / NBRC 102507 / CH34) (Ralstonia metallidurans) protein is Glucose-6-phosphate isomerase.